The sequence spans 429 residues: Adenylosuccinate synthetase (429 aa).

GTP is bound by residues 12-18 and 40-42; these read GDEGKGK and GHT. Asp13 functions as the Proton acceptor in the catalytic mechanism. Mg(2+) is bound by residues Asp13 and Gly40. Residues 13–16, 38–41, Thr129, Arg143, Gln224, Thr239, and Arg303 contribute to the IMP site; these read DEGK and NAGH. Catalysis depends on His41, which acts as the Proton donor. Substrate is bound at residue 299–305; it reads VTTGRAR. GTP contacts are provided by residues Arg305, 331–333, and 413–415; these read KLD and GVG.

The protein belongs to the adenylosuccinate synthetase family. As to quaternary structure, homodimer. The cofactor is Mg(2+).

Its subcellular location is the cytoplasm. It catalyses the reaction IMP + L-aspartate + GTP = N(6)-(1,2-dicarboxyethyl)-AMP + GDP + phosphate + 2 H(+). The protein operates within purine metabolism; AMP biosynthesis via de novo pathway; AMP from IMP: step 1/2. Plays an important role in the de novo pathway of purine nucleotide biosynthesis. Catalyzes the first committed step in the biosynthesis of AMP from IMP. This Rhodococcus jostii (strain RHA1) protein is Adenylosuccinate synthetase.